We begin with the raw amino-acid sequence, 616 residues long: Dihydroxy-acid dehydratase (616 aa).

Asp81 contacts Mg(2+). Residue Cys122 coordinates [2Fe-2S] cluster. Mg(2+)-binding residues include Asp123 and Lys124. Lys124 bears the N6-carboxylysine mark. Cys195 serves as a coordination point for [2Fe-2S] cluster. Glu491 is a binding site for Mg(2+). Catalysis depends on Ser517, which acts as the Proton acceptor.

Belongs to the IlvD/Edd family. In terms of assembly, homodimer. [2Fe-2S] cluster serves as cofactor. It depends on Mg(2+) as a cofactor.

It catalyses the reaction (2R)-2,3-dihydroxy-3-methylbutanoate = 3-methyl-2-oxobutanoate + H2O. It carries out the reaction (2R,3R)-2,3-dihydroxy-3-methylpentanoate = (S)-3-methyl-2-oxopentanoate + H2O. Its pathway is amino-acid biosynthesis; L-isoleucine biosynthesis; L-isoleucine from 2-oxobutanoate: step 3/4. It functions in the pathway amino-acid biosynthesis; L-valine biosynthesis; L-valine from pyruvate: step 3/4. Functions in the biosynthesis of branched-chain amino acids. Catalyzes the dehydration of (2R,3R)-2,3-dihydroxy-3-methylpentanoate (2,3-dihydroxy-3-methylvalerate) into 2-oxo-3-methylpentanoate (2-oxo-3-methylvalerate) and of (2R)-2,3-dihydroxy-3-methylbutanoate (2,3-dihydroxyisovalerate) into 2-oxo-3-methylbutanoate (2-oxoisovalerate), the penultimate precursor to L-isoleucine and L-valine, respectively. The polypeptide is Dihydroxy-acid dehydratase (Klebsiella pneumoniae (strain 342)).